A 288-amino-acid chain; its full sequence is Probable branched-chain-amino-acid aminotransferase (288 aa).

The residue at position 153 (K153) is an N6-(pyridoxal phosphate)lysine.

Belongs to the class-IV pyridoxal-phosphate-dependent aminotransferase family. Pyridoxal 5'-phosphate serves as cofactor.

It carries out the reaction L-leucine + 2-oxoglutarate = 4-methyl-2-oxopentanoate + L-glutamate. The enzyme catalyses L-isoleucine + 2-oxoglutarate = (S)-3-methyl-2-oxopentanoate + L-glutamate. It catalyses the reaction L-valine + 2-oxoglutarate = 3-methyl-2-oxobutanoate + L-glutamate. Its pathway is amino-acid biosynthesis; L-isoleucine biosynthesis; L-isoleucine from 2-oxobutanoate: step 4/4. The protein operates within amino-acid biosynthesis; L-leucine biosynthesis; L-leucine from 3-methyl-2-oxobutanoate: step 4/4. It functions in the pathway amino-acid biosynthesis; L-valine biosynthesis; L-valine from pyruvate: step 4/4. Functionally, acts on leucine, isoleucine and valine. The chain is Probable branched-chain-amino-acid aminotransferase (ilvE) from Rickettsia typhi (strain ATCC VR-144 / Wilmington).